A 343-amino-acid chain; its full sequence is Adenine deaminase (343 aa).

The Zn(2+) site is built by histidine 17, histidine 19, and histidine 197. The active-site Proton donor is the glutamate 200. Aspartate 278 contributes to the Zn(2+) binding site. A substrate-binding site is contributed by aspartate 279.

The protein belongs to the metallo-dependent hydrolases superfamily. Adenosine and AMP deaminases family. Adenine deaminase type 2 subfamily. It depends on Zn(2+) as a cofactor.

The catalysed reaction is adenine + H2O + H(+) = hypoxanthine + NH4(+). In terms of biological role, catalyzes the hydrolytic deamination of adenine to hypoxanthine. Plays an important role in the purine salvage pathway and in nitrogen catabolism. The chain is Adenine deaminase from Rhodopseudomonas palustris (strain BisB18).